The chain runs to 802 residues: Sucrose synthase 1 (802 aa).

A GT-B glycosyltransferase region spans residues 272 to 749; that stretch reads MMFNVVILSP…GLQRIYEKYT (478 aa).

Belongs to the glycosyltransferase 1 family. Plant sucrose synthase subfamily.

It carries out the reaction an NDP-alpha-D-glucose + D-fructose = a ribonucleoside 5'-diphosphate + sucrose + H(+). Sucrose-cleaving enzyme that provides UDP-glucose and fructose for various metabolic pathways. Most active in the sink tissues where it is responsible for the breakdown of the arriving sucrose. This is Sucrose synthase 1 (SH-1) from Zea mays (Maize).